The following is a 111-amino-acid chain: Natriuretic peptide TNP-b (111 aa).

Positions 1–27 are cleaved as a signal peptide; the sequence is MVGLSRLAGGGLLLLLLLALLPLALDG. Positions 28-71 are excised as a propeptide; that stretch reads KPAPLPQALPEALAGGTTALRRDVTEEQQQQLVAEESSGPAAGR. Disordered regions lie at residues 51 to 77 and 92 to 111; these read VTEE…PKIG and SGLG…PGGS. Cysteine 80 and cysteine 96 are disulfide-bonded. A propeptide spanning residues 107 to 111 is cleaved from the precursor; sequence IPGGS.

Belongs to the natriuretic peptide family. As to expression, expressed by the venom gland.

It is found in the secreted. Functionally, snake venom natriuretic peptide that exhibits vasoactive and probable hypotensive activity. Is only weakly active on natriuretic peptide receptor-C (NPR3). This Oxyuranus scutellatus scutellatus (Australian taipan) protein is Natriuretic peptide TNP-b.